The primary structure comprises 1072 residues: DNA-directed RNA polymerase subunit beta (1072 aa).

This sequence belongs to the RNA polymerase beta chain family. In plastids the minimal PEP RNA polymerase catalytic core is composed of four subunits: alpha, beta, beta', and beta''. When a (nuclear-encoded) sigma factor is associated with the core the holoenzyme is formed, which can initiate transcription.

The protein resides in the plastid. Its subcellular location is the chloroplast. It carries out the reaction RNA(n) + a ribonucleoside 5'-triphosphate = RNA(n+1) + diphosphate. Functionally, DNA-dependent RNA polymerase catalyzes the transcription of DNA into RNA using the four ribonucleoside triphosphates as substrates. The protein is DNA-directed RNA polymerase subunit beta of Lepidium virginicum (Virginia pepperweed).